The chain runs to 809 residues: Probable replication endonuclease from prophage-like region (809 aa).

Active-site O-(5'-phospho-DNA)-tyrosine intermediate residues include Tyr-503 and Tyr-507.

It belongs to the phage GPA family.

Functionally, possible endonuclease which induces a single-strand cut and initiates DNA replication. This Salmonella typhimurium (strain LT2 / SGSC1412 / ATCC 700720) protein is Probable replication endonuclease from prophage-like region.